A 433-amino-acid polypeptide reads, in one-letter code: Adenylosuccinate synthetase (433 aa).

Residues 13–19 (GDEGKGK) and 41–43 (GHT) each bind GTP. The Proton acceptor role is filled by aspartate 14. Aspartate 14 and glycine 41 together coordinate Mg(2+). IMP-binding positions include 14–17 (DEGK), 39–42 (NAGH), threonine 130, arginine 144, glutamine 225, threonine 240, and arginine 304. Histidine 42 acts as the Proton donor in catalysis. Residue 300–306 (STTGRKR) coordinates substrate. Residues arginine 306, 332–334 (KLD), and 414–416 (STG) each bind GTP.

The protein belongs to the adenylosuccinate synthetase family. As to quaternary structure, homodimer. Mg(2+) serves as cofactor.

Its subcellular location is the cytoplasm. The catalysed reaction is IMP + L-aspartate + GTP = N(6)-(1,2-dicarboxyethyl)-AMP + GDP + phosphate + 2 H(+). The protein operates within purine metabolism; AMP biosynthesis via de novo pathway; AMP from IMP: step 1/2. In terms of biological role, plays an important role in the de novo pathway of purine nucleotide biosynthesis. Catalyzes the first committed step in the biosynthesis of AMP from IMP. This Buchnera aphidicola subsp. Acyrthosiphon pisum (strain APS) (Acyrthosiphon pisum symbiotic bacterium) protein is Adenylosuccinate synthetase.